The primary structure comprises 208 residues: dITP/XTP pyrophosphatase (208 aa).

17-22 (SNNPGK) contacts substrate. 2 residues coordinate Mg(2+): D49 and D78. Residue D78 is the Proton acceptor of the active site. Residues S79, 164 to 167 (FGYD), K187, and 192 to 193 (HR) each bind substrate.

The protein belongs to the HAM1 NTPase family. In terms of assembly, homodimer. The cofactor is Mg(2+).

The enzyme catalyses XTP + H2O = XMP + diphosphate + H(+). It carries out the reaction dITP + H2O = dIMP + diphosphate + H(+). The catalysed reaction is ITP + H2O = IMP + diphosphate + H(+). Pyrophosphatase that catalyzes the hydrolysis of nucleoside triphosphates to their monophosphate derivatives, with a high preference for the non-canonical purine nucleotides XTP (xanthosine triphosphate), dITP (deoxyinosine triphosphate) and ITP. Seems to function as a house-cleaning enzyme that removes non-canonical purine nucleotides from the nucleotide pool, thus preventing their incorporation into DNA/RNA and avoiding chromosomal lesions. The sequence is that of dITP/XTP pyrophosphatase from Burkholderia pseudomallei (strain K96243).